The primary structure comprises 352 residues: tRNA pseudouridine synthase D (352 aa).

Catalysis depends on Asp81, which acts as the Nucleophile. A TRUD domain is found at 157–303 (GVPNYFGLQR…MAHERRILRL (147 aa)).

This sequence belongs to the pseudouridine synthase TruD family.

The enzyme catalyses uridine(13) in tRNA = pseudouridine(13) in tRNA. Responsible for synthesis of pseudouridine from uracil-13 in transfer RNAs. The chain is tRNA pseudouridine synthase D from Ectopseudomonas mendocina (strain ymp) (Pseudomonas mendocina).